A 355-amino-acid chain; its full sequence is Enhancer of mRNA-decapping protein 1 (355 aa).

Disordered regions lie at residues 1–146, 210–230, and 301–330; these read MSSD…VDGM, MSQP…SQPM, and NSTA…KSSQ. The segment covering 39-49 has biased composition (polar residues); sequence AQKQQLPNGEQ. Residues 57–67 are compositionally biased toward basic residues; it reads KQSRKRGSGRQ. The segment covering 91–110 has biased composition (polar residues); it reads SIPSGSAGSESAQKETSAGQ. The segment covering 123–142 has biased composition (low complexity); the sequence is VPAGGPAGKSSSEPASASSA.

This sequence belongs to the EDC family.

It localises to the cytoplasm. In terms of biological role, mRNA-binding protein which stimulates mRNA decapping. The chain is Enhancer of mRNA-decapping protein 1 (EDC1) from Eremothecium gossypii (strain ATCC 10895 / CBS 109.51 / FGSC 9923 / NRRL Y-1056) (Yeast).